The following is a 429-amino-acid chain: Histidinol dehydrogenase (429 aa).

Positions 130, 191, and 214 each coordinate NAD(+). Residues serine 237, glutamine 259, and histidine 262 each contribute to the substrate site. Positions 259 and 262 each coordinate Zn(2+). Active-site proton acceptor residues include glutamate 327 and histidine 328. Substrate is bound by residues histidine 328, aspartate 361, glutamate 415, and histidine 420. Aspartate 361 lines the Zn(2+) pocket. Histidine 420 is a Zn(2+) binding site.

This sequence belongs to the histidinol dehydrogenase family. Requires Zn(2+) as cofactor.

It catalyses the reaction L-histidinol + 2 NAD(+) + H2O = L-histidine + 2 NADH + 3 H(+). It participates in amino-acid biosynthesis; L-histidine biosynthesis; L-histidine from 5-phospho-alpha-D-ribose 1-diphosphate: step 9/9. Its function is as follows. Catalyzes the sequential NAD-dependent oxidations of L-histidinol to L-histidinaldehyde and then to L-histidine. The chain is Histidinol dehydrogenase from Neisseria meningitidis serogroup A / serotype 4A (strain DSM 15465 / Z2491).